We begin with the raw amino-acid sequence, 560 residues long: Dihydroxy-acid dehydratase (560 aa).

D80 contacts Mg(2+). Residue C121 coordinates [2Fe-2S] cluster. Positions 122 and 123 each coordinate Mg(2+). Residue K123 is modified to N6-carboxylysine. C194 is a binding site for [2Fe-2S] cluster. E447 contributes to the Mg(2+) binding site. Residue S473 is the Proton acceptor of the active site.

It belongs to the IlvD/Edd family. Homodimer. It depends on [2Fe-2S] cluster as a cofactor. Mg(2+) serves as cofactor.

It carries out the reaction (2R)-2,3-dihydroxy-3-methylbutanoate = 3-methyl-2-oxobutanoate + H2O. The catalysed reaction is (2R,3R)-2,3-dihydroxy-3-methylpentanoate = (S)-3-methyl-2-oxopentanoate + H2O. The protein operates within amino-acid biosynthesis; L-isoleucine biosynthesis; L-isoleucine from 2-oxobutanoate: step 3/4. Its pathway is amino-acid biosynthesis; L-valine biosynthesis; L-valine from pyruvate: step 3/4. Its function is as follows. Functions in the biosynthesis of branched-chain amino acids. Catalyzes the dehydration of (2R,3R)-2,3-dihydroxy-3-methylpentanoate (2,3-dihydroxy-3-methylvalerate) into 2-oxo-3-methylpentanoate (2-oxo-3-methylvalerate) and of (2R)-2,3-dihydroxy-3-methylbutanoate (2,3-dihydroxyisovalerate) into 2-oxo-3-methylbutanoate (2-oxoisovalerate), the penultimate precursor to L-isoleucine and L-valine, respectively. This is Dihydroxy-acid dehydratase from Chlorobaculum parvum (strain DSM 263 / NCIMB 8327) (Chlorobium vibrioforme subsp. thiosulfatophilum).